The following is a 591-amino-acid chain: Aspartate--tRNA(Asp/Asn) ligase (591 aa).

L-aspartate is bound at residue glutamate 174. Residues 198–201 (QLFK) form an aspartate region. Position 220 (arginine 220) interacts with L-aspartate. Residues 220 to 222 (RDE) and glutamine 229 each bind ATP. L-aspartate is bound at residue histidine 450. Glutamate 483 lines the ATP pocket. Arginine 490 contacts L-aspartate. 535–538 (GLDR) serves as a coordination point for ATP.

Belongs to the class-II aminoacyl-tRNA synthetase family. Type 1 subfamily. As to quaternary structure, homodimer.

Its subcellular location is the cytoplasm. It catalyses the reaction tRNA(Asx) + L-aspartate + ATP = L-aspartyl-tRNA(Asx) + AMP + diphosphate. Functionally, aspartyl-tRNA synthetase with relaxed tRNA specificity since it is able to aspartylate not only its cognate tRNA(Asp) but also tRNA(Asn). Reaction proceeds in two steps: L-aspartate is first activated by ATP to form Asp-AMP and then transferred to the acceptor end of tRNA(Asp/Asn). In Pseudomonas savastanoi pv. phaseolicola (strain 1448A / Race 6) (Pseudomonas syringae pv. phaseolicola (strain 1448A / Race 6)), this protein is Aspartate--tRNA(Asp/Asn) ligase.